A 450-amino-acid chain; its full sequence is Grayanic acid biosynthesis cluster O-methyltransferase (450 aa).

Residue aspartate 254 participates in S-adenosyl-L-methionine binding. Histidine 301 (proton acceptor) is an active-site residue.

This sequence belongs to the class I-like SAM-binding methyltransferase superfamily. Cation-independent O-methyltransferase family. COMT subfamily.

Its pathway is secondary metabolite biosynthesis. Functionally, non-reducing polyketide synthase; part of the gene cluster that mediates the biosynthesis of orcinol depsidone grayanic acid (GRA), the only major secondary metabolite known in C.grayi. The first step consists in the ring and depside synthesis by PKS16 leading to 4-O-demethylsphaerophorin, involving different orcinol-like rings, one with acetyl CoA and the other with octanoyl CoA as the starter. Further depsidone formation by the GRA cluster-specific cytochrome P450 leads to 4-O-demethylgrayanic acid. Finally, the cluster specific O-methyltransferase probably converts the 4-O-demethylgrayanic acid into grayanic acid. The sequence is that of Grayanic acid biosynthesis cluster O-methyltransferase from Cladonia grayi (Gray's cup lichen).